We begin with the raw amino-acid sequence, 210 residues long: Protein SYM1 (210 aa).

4 helical membrane-spanning segments follow: residues 22-39 (IMTG…QLLF), 68-84 (AVVY…DRWY), 112-129 (LGFA…MSLL), and 173-189 (LLAA…FLSY).

It belongs to the peroxisomal membrane protein PXMP2/4 family.

The protein resides in the mitochondrion inner membrane. Its function is as follows. May be involved in cellular response to stress. Required to maintain mitochondrial DNA (mtDNA) integrity and stability. In Candida glabrata (strain ATCC 2001 / BCRC 20586 / JCM 3761 / NBRC 0622 / NRRL Y-65 / CBS 138) (Yeast), this protein is Protein SYM1 (SYM1).